Reading from the N-terminus, the 311-residue chain is Methionyl-tRNA formyltransferase (311 aa).

108–111 (SILP) is a (6S)-5,6,7,8-tetrahydrofolate binding site.

The protein belongs to the Fmt family.

It catalyses the reaction L-methionyl-tRNA(fMet) + (6R)-10-formyltetrahydrofolate = N-formyl-L-methionyl-tRNA(fMet) + (6S)-5,6,7,8-tetrahydrofolate + H(+). Attaches a formyl group to the free amino group of methionyl-tRNA(fMet). The formyl group appears to play a dual role in the initiator identity of N-formylmethionyl-tRNA by promoting its recognition by IF2 and preventing the misappropriation of this tRNA by the elongation apparatus. The protein is Methionyl-tRNA formyltransferase of Sorangium cellulosum (strain So ce56) (Polyangium cellulosum (strain So ce56)).